The chain runs to 342 residues: Nicotinate-nucleotide--dimethylbenzimidazole phosphoribosyltransferase (342 aa).

The active-site Proton acceptor is the Glu-311.

Belongs to the CobT family.

The catalysed reaction is 5,6-dimethylbenzimidazole + nicotinate beta-D-ribonucleotide = alpha-ribazole 5'-phosphate + nicotinate + H(+). It functions in the pathway nucleoside biosynthesis; alpha-ribazole biosynthesis; alpha-ribazole from 5,6-dimethylbenzimidazole: step 1/2. In terms of biological role, catalyzes the synthesis of alpha-ribazole-5'-phosphate from nicotinate mononucleotide (NAMN) and 5,6-dimethylbenzimidazole (DMB). The protein is Nicotinate-nucleotide--dimethylbenzimidazole phosphoribosyltransferase of Photobacterium profundum (strain SS9).